The chain runs to 110 residues: Large ribosomal subunit protein uL22 (110 aa).

The protein belongs to the universal ribosomal protein uL22 family. In terms of assembly, part of the 50S ribosomal subunit.

Its function is as follows. This protein binds specifically to 23S rRNA; its binding is stimulated by other ribosomal proteins, e.g. L4, L17, and L20. It is important during the early stages of 50S assembly. It makes multiple contacts with different domains of the 23S rRNA in the assembled 50S subunit and ribosome. In terms of biological role, the globular domain of the protein is located near the polypeptide exit tunnel on the outside of the subunit, while an extended beta-hairpin is found that lines the wall of the exit tunnel in the center of the 70S ribosome. This Syntrophobacter fumaroxidans (strain DSM 10017 / MPOB) protein is Large ribosomal subunit protein uL22.